We begin with the raw amino-acid sequence, 1098 residues long: Ran-binding protein 16 (1098 aa).

Belongs to the exportin family. As to quaternary structure, binds to nucleoporins and the GTP-bound form of Ran.

The protein resides in the cytoplasm. It is found in the nucleus. Its function is as follows. May function as a nuclear transport receptor. This chain is Ran-binding protein 16 (Ranbp16), found in Drosophila melanogaster (Fruit fly).